The sequence spans 117 residues: Large ribosomal subunit protein uL18 (117 aa).

This sequence belongs to the universal ribosomal protein uL18 family. Part of the 50S ribosomal subunit; part of the 5S rRNA/L5/L18/L25 subcomplex. Contacts the 5S and 23S rRNAs.

Functionally, this is one of the proteins that bind and probably mediate the attachment of the 5S RNA into the large ribosomal subunit, where it forms part of the central protuberance. The chain is Large ribosomal subunit protein uL18 from Polynucleobacter asymbioticus (strain DSM 18221 / CIP 109841 / QLW-P1DMWA-1) (Polynucleobacter necessarius subsp. asymbioticus).